Reading from the N-terminus, the 983-residue chain is Ephrin type-A receptor 3 (983 aa).

A signal peptide spans 1–20; it reads MDCQLSILLLLSCSVLDSFG. Residues 21-541 are Extracellular-facing; it reads ELIPQPSNEV…SFSISGESSQ (521 aa). An Eph LBD domain is found at 29-207; the sequence is EVNLLDSKTI…YFKKCPFTVK (179 aa). N-linked (GlcNAc...) asparagine glycans are attached at residues Asn-232, Asn-337, Asn-391, Asn-404, and Asn-493. Fibronectin type-III domains follow at residues 325-435 and 436-531; these read PPSS…TNQA and APSP…TSPD. The chain crosses the membrane as a helical span at residues 542–565; it reads VVMIAISAAVAIILLTVVIYVLIG. Residues 566 to 983 lie on the Cytoplasmic side of the membrane; that stretch reads RFCGYKSKHG…TQSKNGPVPV (418 aa). Residues Tyr-596 and Tyr-602 each carry the phosphotyrosine; by autocatalysis modification. The Protein kinase domain maps to 621–882; the sequence is ISIDKVVGAG…QIVSILDKLI (262 aa). Residues 628–633, Lys-653, and 700–706 each bind ATP; these read GAGEFG and EYMENGS. Tyr-701 carries the phosphotyrosine; by autocatalysis modification. The active-site Proton acceptor is the Asp-746. 750–751 provides a ligand contact to ATP; it reads RN. Position 779 is a phosphotyrosine; by autocatalysis (Tyr-779). The region spanning 911-975 is the SAM domain; that stretch reads TTFRTTGDWL…ISSIKALETQ (65 aa). At Tyr-937 the chain carries Phosphotyrosine. The short motif at 981–983 is the PDZ-binding element; it reads VPV.

The protein belongs to the protein kinase superfamily. Tyr protein kinase family. Ephrin receptor subfamily. As to quaternary structure, heterotetramer upon binding of the ligand. The heterotetramer is composed of an ephrin dimer and a receptor dimer. Oligomerization is probably required to induce biological responses. Forms a ternary EFNA5-EPHA3-ADAM10 complex mediating EFNA5 extracellular domain shedding by ADAM10 which regulates the EFNA5-EPHA3 complex internalization and function. Interacts with NCK1 (via SH2 domain); mediates EFNA5-EPHA3 signaling. Interacts (phosphorylated) with PTPN1; dephosphorylates EPHA3 and may regulate its trafficking and function. Interacts (phosphorylated) with CRK; mediates EFNA5-EPHA3 signaling through RHOA GTPase activation. Post-translationally, autophosphorylates upon activation by EFNA5. Phosphorylation on Tyr-602 mediates interaction with NCK1. Dephosphorylated by PTPN1. In terms of tissue distribution, widely expressed. Highest level in placenta.

The protein localises to the cell membrane. Its subcellular location is the secreted. The catalysed reaction is L-tyrosyl-[protein] + ATP = O-phospho-L-tyrosyl-[protein] + ADP + H(+). Receptor tyrosine kinase which binds promiscuously membrane-bound ephrin family ligands residing on adjacent cells, leading to contact-dependent bidirectional signaling into neighboring cells. The signaling pathway downstream of the receptor is referred to as forward signaling while the signaling pathway downstream of the ephrin ligand is referred to as reverse signaling. Highly promiscuous for ephrin-A ligands it binds preferentially EFNA5. Upon activation by EFNA5 regulates cell-cell adhesion, cytoskeletal organization and cell migration. Plays a role in cardiac cells migration and differentiation and regulates the formation of the atrioventricular canal and septum during development probably through activation by EFNA1. Involved in the retinotectal mapping of neurons. May also control the segregation but not the guidance of motor and sensory axons during neuromuscular circuit development. This is Ephrin type-A receptor 3 (EPHA3) from Homo sapiens (Human).